The primary structure comprises 679 residues: Protein polyglycylase TTLL10 (679 aa).

Positions 1 to 15 (MPLHPPARRPHGHRR) are enriched in basic residues. 3 disordered regions span residues 1–33 (MPLH…GRLS), 49–77 (GHRA…LMPA), and 96–124 (VSFK…RMGS). Positions 18 to 30 (SEAQTEATTQDTG) are enriched in polar residues. Residues 96 to 110 (VSFKRPKRSRTHQSH) show a composition bias toward basic residues. A TTL domain is found at 172-543 (QGPFFYIGGT…TCQKSLHSQK (372 aa)). ATP is bound by residues Lys304, 310–311 (QG), 353–356 (QRYV), 366–368 (KFD), and 409–410 (TN). An a protein-binding site is contributed by Gln310. Mg(2+) contacts are provided by Asp489, Glu502, and Asn504. The segment at 605 to 679 (DRPAARKSMS…EQRSTSHRGS (75 aa)) is disordered.

Mg(2+) serves as cofactor.

The protein localises to the cytoplasm. It localises to the cytoskeleton. Its subcellular location is the cell projection. The protein resides in the cilium. It is found in the cilium axoneme. The catalysed reaction is (glycyl)(n)-glycyl-L-glutamyl-[protein] + glycine + ATP = (glycyl)(n+1)-glycyl-L-glutamyl-[protein] + ADP + phosphate + H(+). Functionally, polyglycylase which modifies both tubulin and non-tubulin proteins, generating polyglycine side chains of variable lengths on the gamma-carboxyl groups of specific glutamate residues of target proteins. Involved in the elongation step rather than the initiation step of the polyglycylation reaction. Polyglycylates alpha-tubulin and beta-tubulin. Polyglycylates non-tubulin proteins such as nucleosome assembly protein NAP1. This is Protein polyglycylase TTLL10 from Rattus norvegicus (Rat).